We begin with the raw amino-acid sequence, 758 residues long: Microtubule-associated protein tau (758 aa).

A compositionally biased stretch (basic and acidic residues) spans 1–26 (MAEPRQEFEVMEDHAGTYGLGDRKDQ). Positions 1–573 (MAEPRQEFEV…PVPMPDLKNV (573 aa)) are disordered. Position 2 is an N-acetylalanine (alanine 2). At tyrosine 18 the chain carries Phosphotyrosine; by FYN. Tyrosine 29 bears the Phosphotyrosine mark. Residue lysine 44 forms a Glycyl lysine isopeptide (Lys-Gly) (interchain with G-Cter in ubiquitin) linkage. Phosphoserine is present on residues serine 46 and serine 61. Residues 61–71 (SETSDAKSTPT) show a composition bias toward polar residues. Phosphothreonine occurs at positions 69 and 71. N-linked (Glc) (glycation) lysine; in PHF-tau; in vitro glycosylation is present at lysine 87. Threonine 111 carries the phosphothreonine modification. Basic and acidic residues-rich tracts occupy residues 179-189 (EGGRHAPELLK) and 207-216 (GGKERPGSKE). Residue serine 214 is modified to Phosphoserine; by SGK1. Positions 217–228 (EVDEDRDVDESS) are enriched in acidic residues. Basic and acidic residues predominate over residues 314-323 (EQAHSEEHLG). A compositionally biased stretch (low complexity) spans 324-340 (RAAFPGAPGEGPEARGP). Basic and acidic residues-rich tracts occupy residues 344–356 (EDTKEADLPEPSE) and 381–393 (KSKDGTGSDDKKA). Lysine 383 carries an N-linked (Glc) (glycation) lysine; in PHF-tau; in vitro glycan. Positions 442 to 453 (VSSVTSRTGSSG) are enriched in low complexity. The span at 455–466 (KEMKLKGADGKT) shows a compositional bias: basic and acidic residues. Lysine 467 carries an N-linked (Glc) (glycation) lysine; in PHF-tau; in vitro glycan. A Phosphothreonine; by PDPK1 modification is found at threonine 470. Omega-N-methylarginine is present on arginine 472. Lysine 480 carries N-linked (Glc) (glycation) lysine; in PHF-tau; in vitro glycosylation. At lysine 480 the chain carries N6,N6-dimethyllysine; alternate. At lysine 480 the chain carries N6-acetyllysine; alternate. Asparagine 484 is subject to Deamidated asparagine; in tau and PHF-tau; partial. Phosphothreonine is present on threonine 486. An N-linked (Glc) (glycation) lysine; in PHF-tau; in vitro glycan is attached at lysine 491. The segment covering 491–503 (KTPPAPKTPPSSG) has biased composition (pro residues). Residue threonine 492 is modified to Phosphothreonine. A Phosphothreonine; by PDPK1 modification is found at threonine 498. 3 positions are modified to phosphoserine: serine 502, serine 508, and serine 512. Residues 504 to 531 (EPPKSGDRSGYSSPGSPGTPGSRSRTPS) are compositionally biased toward low complexity. Tyrosine 514 carries the post-translational modification Phosphotyrosine; by TTBK1. Phosphoserine; by PDPK1 and TTBK1 occurs at positions 515 and 516. Serine 519 carries the post-translational modification Phosphoserine; by CK1, PDPK1 and TTBK1. The residue at position 522 (threonine 522) is a Phosphothreonine; by CK1 and PDPK1. Serine 525 carries an O-linked (GlcNAc) serine glycan. A Phosphothreonine; by BRSK1, BRSK2, DYRK2 and PDPK1 modification is found at threonine 529. Phosphoserine; by PKA is present on serine 531. Threonine 534 carries the phosphothreonine; by PDPK1 modification. Lysine 542 carries an N-linked (Glc) (glycation) lysine; in PHF-tau; in vitro glycan. Lysine 542 carries the post-translational modification N6-acetyllysine. Residue threonine 548 is modified to Phosphothreonine; by GSK3-beta and PDPK1. The N-linked (Glc) (glycation) lysine; in PHF-tau; in vitro glycan is linked to lysine 551. A Phosphoserine; by PDPK1 modification is found at serine 552. At serine 554 the chain carries Phosphoserine; by PHK. O-linked (GlcNAc) serine glycosylation occurs at serine 555. 4 Tau/MAP repeats span residues 561–591 (QTAPVPMPDLKNVKSKIGSTENLKHQPGGGK), 592–622 (VQIINKKLDLSNVQSKCGSKDNIKHVPGGGS), 623–653 (VQIVYKPVDLSKVTSKCGSLGNIHHKPGGGQ), and 654–685 (VEVKSEKLDFKDRVQSKIGSLDNITHVPGGGN). Residues 561 to 685 (QTAPVPMPDL…NITHVPGGGN (125 aa)) form a microtubule-binding domain region. Residue lysine 571 forms a Glycyl lysine isopeptide (Lys-Gly) (interchain with G-Cter in ubiquitin); in PHF-tau linkage. The N-linked (Glc) (glycation) lysine; in PHF-tau; in vitro glycan is linked to lysine 576. Residue lysine 576 is modified to N6-acetyllysine; alternate. At lysine 576 the chain carries N6-methyllysine; alternate. Lysine 576 is covalently cross-linked (Glycyl lysine isopeptide (Lys-Gly) (interchain with G-Cter in ubiquitin); alternate). Residue serine 579 is modified to Phosphoserine; by MARK1, MARK2, MARK3, MARK4, BRSK1, BRSK2 and PHK. Lysine 584 is covalently cross-linked (Glycyl lysine isopeptide (Lys-Gly) (interchain with G-Cter in ubiquitin)). Asparagine 596 is subject to Deamidated asparagine; in tau and PHF-tau; partial. Residues lysine 597 and lysine 598 are each glycosylated (N-linked (Glc) (glycation) lysine; in PHF-tau; in vitro). An N6-acetyllysine; alternate modification is found at lysine 598. Lysine 598 is covalently cross-linked (Glycyl lysine isopeptide (Lys-Gly) (interchain with G-Cter in ubiquitin); alternate). Serine 602 carries the post-translational modification Phosphoserine; by PHK. Lysine 607 is subject to N6-acetyllysine. Cysteine 608 and cysteine 639 are oxidised to a cystine. Serine 610 carries the phosphoserine modification. Lysine 615 carries the post-translational modification N6-acetyllysine; alternate. Residue lysine 615 forms a Glycyl lysine isopeptide (Lys-Gly) (interchain with G-Cter in ubiquitin); alternate linkage. A Phosphoserine; by PHK modification is found at serine 622. At lysine 628 the chain carries N6,N6-dimethyllysine; alternate. N6-acetyllysine; alternate is present on residues lysine 628, lysine 634, and lysine 638. Lysine 628 is covalently cross-linked (Glycyl lysine isopeptide (Lys-Gly) (interchain with G-Cter in ubiquitin); in PHF-tau). Glycyl lysine isopeptide (Lys-Gly) (interchain with G-Cter in ubiquitin); alternate cross-links involve residues lysine 634 and lysine 638. Position 641 is a phosphoserine (serine 641). An N6-acetyllysine; alternate mark is found at lysine 648, lysine 660, and lysine 664. Glycyl lysine isopeptide (Lys-Gly) (interchain with G-Cter in ubiquitin); alternate cross-links involve residues lysine 648, lysine 660, and lysine 664. N-linked (Glc) (glycation) lysine; in PHF-tau; in vitro glycosylation occurs at lysine 664. At arginine 666 the chain carries Omega-N-methylarginine. Serine 669 carries the phosphoserine; by PHK modification. Lysine 670 is a glycosylation site (N-linked (Glc) (glycation) lysine; in PHF-tau; in vitro). Residue lysine 670 forms a Glycyl lysine isopeptide (Lys-Gly) (interchain with G-Cter in ubiquitin); in PHF-tau linkage. Serine 673 carries the post-translational modification Phosphoserine. N-linked (Glc) (glycation) lysine; in PHF-tau; in vitro glycosylation is present at lysine 686. At lysine 686 the chain carries N6-acetyllysine; alternate. Lysine 686 participates in a covalent cross-link: Glycyl lysine isopeptide (Lys-Gly) (interchain with G-Cter in ubiquitin); alternate. Lysine 692 participates in a covalent cross-link: Glycyl lysine isopeptide (Lys-Gly) (interchain with G-Cter in ubiquitin). N6-acetyllysine; alternate is present on lysine 702. Lysine 702 participates in a covalent cross-link: Glycyl lysine isopeptide (Lys-Gly) (interchain with G-Cter in ubiquitin); alternate. Tyrosine 711 is subject to Phosphotyrosine. Residue serine 713 is modified to Phosphoserine; by CK1 and PDPK1. The segment at 715–734 (VVSGDTSPRHLSNVSSTGSI) is disordered. Serine 717 carries the phosphoserine; alternate modification. Residue serine 717 is glycosylated (O-linked (GlcNAc) serine; alternate). Residues 718 to 733 (GDTSPRHLSNVSSTGS) are compositionally biased toward polar residues. The residue at position 720 (threonine 720) is a Phosphothreonine. Phosphoserine; by CK1 and PDPK1 is present on serine 721. Residue serine 726 is modified to Phosphoserine. Position 733 is a phosphoserine; by CaMK2 and TTBK1 (serine 733). Serine 739 is subject to Phosphoserine; by PDPK1 and TTBK1. Threonine 744 carries the post-translational modification Phosphothreonine; by TTBK1.

In terms of assembly, interacts with MARK1, MARK2, MARK3 and MARK4. Interacts with PSMC2 through SQSTM1. Interacts with SQSTM1 when polyubiquitinated. Interacts with FKBP4. Binds to CSNK1D. Interacts with SGK1. Interacts with EPM2A; the interaction dephosphorylates MAPT at Ser-396. Interacts with PIN1. Interacts with LRRK2. Interacts with LRP1, leading to endocytosis; this interaction is reduced in the presence of LRPAP1/RAP. In terms of processing, phosphorylation at serine and threonine residues in S-P or T-P motifs by proline-directed protein kinases (PDPK1, CDK1, CDK5, GSK3, MAPK) (only 2-3 sites per protein in interphase, seven-fold increase in mitosis, and in the form associated with paired helical filaments (PHF-tau)), and at serine residues in K-X-G-S motifs by MAP/microtubule affinity-regulating kinase (MARK1, MARK2, MARK3 or MARK4), causing detachment from microtubules, and their disassembly. Phosphorylation decreases with age. Phosphorylation within tau/MAP's repeat domain or in flanking regions seems to reduce tau/MAP's interaction with, respectively, microtubules or plasma membrane components. Phosphorylation on Ser-610, Ser-622, Ser-641 and Ser-673 in several isoforms during mitosis. Phosphorylation at Ser-548 by GSK3B reduces ability to bind and stabilize microtubules. Phosphorylation at Ser-579 by BRSK1 and BRSK2 in neurons affects ability to bind microtubules and plays a role in neuron polarization. Phosphorylated at Ser-554, Ser-579, Ser-602, Ser-606 and Ser-669 by PHK. Phosphorylation at Ser-214 by SGK1 mediates microtubule depolymerization and neurite formation in hippocampal neurons. There is a reciprocal down-regulation of phosphorylation and O-GlcNAcylation. Phosphorylation on Ser-717 completely abolishes the O-GlcNAcylation on this site, while phosphorylation on Ser-713 and Ser-721 reduces glycosylation by a factor of 2 and 4 respectively. Phosphorylation on Ser-721 is reduced by about 41.5% by GlcNAcylation on Ser-717. Dephosphorylated at several serine and threonine residues by the serine/threonine phosphatase PPP5C. Post-translationally, polyubiquitinated. Requires functional TRAF6 and may provoke SQSTM1-dependent degradation by the proteasome. PHF-tau can be modified by three different forms of polyubiquitination. 'Lys-48'-linked polyubiquitination is the major form, 'Lys-6'-linked and 'Lys-11'-linked polyubiquitination also occur. O-glycosylated. O-GlcNAcylation content is around 8.2%. There is reciprocal down-regulation of phosphorylation and O-GlcNAcylation. Phosphorylation on Ser-717 completely abolishes the O-GlcNAcylation on this site, while phosphorylation on Ser-713 and Ser-721 reduces O-GlcNAcylation by a factor of 2 and 4 respectively. O-GlcNAcylation on Ser-717 decreases the phosphorylation on Ser-721 by about 41.5%. In terms of processing, glycation of PHF-tau, but not normal brain TAU/MAPT. Glycation is a non-enzymatic post-translational modification that involves a covalent linkage between a sugar and an amino group of a protein molecule forming ketoamine. Subsequent oxidation, fragmentation and/or cross-linking of ketoamine leads to the production of advanced glycation endproducts (AGES). Glycation may play a role in stabilizing PHF aggregation leading to tangle formation in AD. Expressed in neurons. Isoform PNS-tau is expressed in the peripheral nervous system while the others are expressed in the central nervous system.

Its subcellular location is the cytoplasm. The protein localises to the cytosol. It is found in the cell membrane. It localises to the cytoskeleton. The protein resides in the cell projection. Its subcellular location is the axon. The protein localises to the dendrite. It is found in the secreted. Functionally, promotes microtubule assembly and stability, and might be involved in the establishment and maintenance of neuronal polarity. The C-terminus binds axonal microtubules while the N-terminus binds neural plasma membrane components, suggesting that tau functions as a linker protein between both. Axonal polarity is predetermined by TAU/MAPT localization (in the neuronal cell) in the domain of the cell body defined by the centrosome. The short isoforms allow plasticity of the cytoskeleton whereas the longer isoforms may preferentially play a role in its stabilization. The protein is Microtubule-associated protein tau of Homo sapiens (Human).